A 683-amino-acid chain; its full sequence is Methionine--tRNA ligase (683 aa).

The 'HIGH' region signature appears at 15–25 (PYANGSIHLGH). 4 residues coordinate Zn(2+): cysteine 146, cysteine 149, cysteine 159, and cysteine 162. The 'KMSKS' region signature appears at 332-336 (KMSKS). Lysine 335 provides a ligand contact to ATP. The tRNA-binding domain occupies 582-683 (DFAKVDLRIA…QGAQAGMRVM (102 aa)).

The protein belongs to the class-I aminoacyl-tRNA synthetase family. MetG type 1 subfamily. In terms of assembly, homodimer. Requires Zn(2+) as cofactor.

Its subcellular location is the cytoplasm. It carries out the reaction tRNA(Met) + L-methionine + ATP = L-methionyl-tRNA(Met) + AMP + diphosphate. Its function is as follows. Is required not only for elongation of protein synthesis but also for the initiation of all mRNA translation through initiator tRNA(fMet) aminoacylation. The chain is Methionine--tRNA ligase from Vibrio cholerae serotype O1 (strain ATCC 39315 / El Tor Inaba N16961).